A 689-amino-acid polypeptide reads, in one-letter code: DNA ligase (689 aa).

NAD(+)-binding positions include 40–44, 89–90, and glutamate 121; these read DAEYD and SL. Residue lysine 123 is the N6-AMP-lysine intermediate of the active site. Residues arginine 144, glutamate 179, lysine 295, and lysine 319 each contribute to the NAD(+) site. Positions 413, 416, 431, and 437 each coordinate Zn(2+). Positions 610–689 constitute a BRCT domain; that stretch reads KEHSSLTGKI…EEWLTIVNNV (80 aa).

This sequence belongs to the NAD-dependent DNA ligase family. LigA subfamily. Mg(2+) is required as a cofactor. The cofactor is Mn(2+).

It carries out the reaction NAD(+) + (deoxyribonucleotide)n-3'-hydroxyl + 5'-phospho-(deoxyribonucleotide)m = (deoxyribonucleotide)n+m + AMP + beta-nicotinamide D-nucleotide.. In terms of biological role, DNA ligase that catalyzes the formation of phosphodiester linkages between 5'-phosphoryl and 3'-hydroxyl groups in double-stranded DNA using NAD as a coenzyme and as the energy source for the reaction. It is essential for DNA replication and repair of damaged DNA. This chain is DNA ligase, found in Rickettsia canadensis (strain McKiel).